The chain runs to 876 residues: DNA topoisomerase 1 (876 aa).

One can recognise a Toprim domain in the interval 3–150 (KSLVIVESPA…RYKRVVFNEI (148 aa)). Glutamate 9 contacts Mg(2+). The segment at 37–69 (LPTAGQTATPTGKAAAASTKKASTTDKEQQKRE) is disordered. Residues 38 to 58 (PTAGQTATPTGKAAAASTKKA) are compositionally biased toward low complexity. Positions 59–69 (STTDKEQQKRE) are enriched in basic and acidic residues. A Mg(2+)-binding site is contributed by aspartate 119. The 417-residue stretch at 166-582 (NMDGVNAQQA…EFFADFSRDL (417 aa)) folds into the Topo IA-type catalytic domain. Residues 200 to 205 (SAGRVQ) form an interaction with DNA region. Catalysis depends on tyrosine 327, which acts as the O-(5'-phospho-DNA)-tyrosine intermediate. 2 consecutive C4-type zinc fingers follow at residues 668–695 (CPIC…NPNC) and 717–742 (CDKC…NDAC).

The protein belongs to the type IA topoisomerase family. As to quaternary structure, monomer. The cofactor is Mg(2+).

It catalyses the reaction ATP-independent breakage of single-stranded DNA, followed by passage and rejoining.. Releases the supercoiling and torsional tension of DNA, which is introduced during the DNA replication and transcription, by transiently cleaving and rejoining one strand of the DNA duplex. Introduces a single-strand break via transesterification at a target site in duplex DNA. The scissile phosphodiester is attacked by the catalytic tyrosine of the enzyme, resulting in the formation of a DNA-(5'-phosphotyrosyl)-enzyme intermediate and the expulsion of a 3'-OH DNA strand. The free DNA strand then undergoes passage around the unbroken strand, thus removing DNA supercoils. Finally, in the religation step, the DNA 3'-OH attacks the covalent intermediate to expel the active-site tyrosine and restore the DNA phosphodiester backbone. The sequence is that of DNA topoisomerase 1 from Vibrio cholerae serotype O1 (strain ATCC 39315 / El Tor Inaba N16961).